The chain runs to 262 residues: Cytochrome c oxidase subunit 3 (262 aa).

6 helical membrane passes run 39 to 59 (YDIS…YQWW), 83 to 103 (GMIL…WAFF), 120 to 140 (MGII…ILLA), 163 to 183 (GLFF…YEYI), 201 to 221 (ATGF…VCLL), and 240 to 260 (AWYW…IYWW).

The protein belongs to the cytochrome c oxidase subunit 3 family. In terms of assembly, component of the cytochrome c oxidase (complex IV, CIV), a multisubunit enzyme composed of a catalytic core of 3 subunits and several supernumerary subunits. The complex exists as a monomer or a dimer and forms supercomplexes (SCs) in the inner mitochondrial membrane with ubiquinol-cytochrome c oxidoreductase (cytochrome b-c1 complex, complex III, CIII).

Its subcellular location is the mitochondrion inner membrane. It catalyses the reaction 4 Fe(II)-[cytochrome c] + O2 + 8 H(+)(in) = 4 Fe(III)-[cytochrome c] + 2 H2O + 4 H(+)(out). Functionally, component of the cytochrome c oxidase, the last enzyme in the mitochondrial electron transport chain which drives oxidative phosphorylation. The respiratory chain contains 3 multisubunit complexes succinate dehydrogenase (complex II, CII), ubiquinol-cytochrome c oxidoreductase (cytochrome b-c1 complex, complex III, CIII) and cytochrome c oxidase (complex IV, CIV), that cooperate to transfer electrons derived from NADH and succinate to molecular oxygen, creating an electrochemical gradient over the inner membrane that drives transmembrane transport and the ATP synthase. Cytochrome c oxidase is the component of the respiratory chain that catalyzes the reduction of oxygen to water. Electrons originating from reduced cytochrome c in the intermembrane space (IMS) are transferred via the dinuclear copper A center (CU(A)) of subunit 2 and heme A of subunit 1 to the active site in subunit 1, a binuclear center (BNC) formed by heme A3 and copper B (CU(B)). The BNC reduces molecular oxygen to 2 water molecules using 4 electrons from cytochrome c in the IMS and 4 protons from the mitochondrial matrix. The chain is Cytochrome c oxidase subunit 3 (mt:CoIII) from Drosophila yakuba (Fruit fly).